Consider the following 689-residue polypeptide: Elongation factor G (689 aa).

Residues 8–282 (ENTRNLGIMA…AVVDYLPSPL (275 aa)) enclose the tr-type G domain. Residues 17–24 (AHIDAGKT), 81–85 (DTPGH), and 135–138 (NKMD) contribute to the GTP site.

This sequence belongs to the TRAFAC class translation factor GTPase superfamily. Classic translation factor GTPase family. EF-G/EF-2 subfamily.

It is found in the cytoplasm. Its function is as follows. Catalyzes the GTP-dependent ribosomal translocation step during translation elongation. During this step, the ribosome changes from the pre-translocational (PRE) to the post-translocational (POST) state as the newly formed A-site-bound peptidyl-tRNA and P-site-bound deacylated tRNA move to the P and E sites, respectively. Catalyzes the coordinated movement of the two tRNA molecules, the mRNA and conformational changes in the ribosome. In Mesoplasma florum (strain ATCC 33453 / NBRC 100688 / NCTC 11704 / L1) (Acholeplasma florum), this protein is Elongation factor G.